The chain runs to 334 residues: uncharacterized protein (334 aa).

A run of 2 helical transmembrane segments spans residues 1–21 (MFRL…FTFI) and 46–66 (ILGL…IIII).

The protein localises to the cell membrane. This is an uncharacterized protein from Rickettsia prowazekii (strain Madrid E).